We begin with the raw amino-acid sequence, 144 residues long: Sirohydrochlorin cobaltochelatase (144 aa).

H9 serves as the catalytic Proton acceptor. H9 is a binding site for Co(2+). H9 is a Ni(2+) binding site. Substrate contacts are provided by residues E45 and L70–H75. Co(2+) is bound at residue H75. Position 75 (H75) interacts with Ni(2+). The interval G89–A112 is disordered. Residues H95–H108 are compositionally biased toward basic residues.

Belongs to the CbiX family. CbiXS subfamily. As to quaternary structure, homotetramer; dimer of dimers.

The enzyme catalyses Co-sirohydrochlorin + 2 H(+) = sirohydrochlorin + Co(2+). The catalysed reaction is Ni-sirohydrochlorin + 2 H(+) = sirohydrochlorin + Ni(2+). It participates in cofactor biosynthesis; adenosylcobalamin biosynthesis; cob(II)yrinate a,c-diamide from sirohydrochlorin (anaerobic route): step 1/10. Catalyzes the insertion of Co(2+) into sirohydrochlorin as part of the anaerobic pathway to cobalamin biosynthesis. Involved in the biosynthesis of the unique nickel-containing tetrapyrrole coenzyme F430, the prosthetic group of methyl-coenzyme M reductase (MCR), which plays a key role in methanogenesis and anaerobic methane oxidation. Catalyzes the insertion of Ni(2+) into sirohydrochlorin to yield Ni-sirohydrochlorin. In Methanococcus maripaludis (strain DSM 14266 / JCM 13030 / NBRC 101832 / S2 / LL), this protein is Sirohydrochlorin cobaltochelatase.